Reading from the N-terminus, the 367-residue chain is Peptide chain release factor 2 (367 aa).

Gln254 carries the N5-methylglutamine modification.

The protein belongs to the prokaryotic/mitochondrial release factor family. Methylated by PrmC. Methylation increases the termination efficiency of RF2.

The protein resides in the cytoplasm. Its function is as follows. Peptide chain release factor 2 directs the termination of translation in response to the peptide chain termination codons UGA and UAA. The sequence is that of Peptide chain release factor 2 from Bordetella avium (strain 197N).